Here is a 1609-residue protein sequence, read N- to C-terminus: Laminin subunit gamma-1 (1609 aa).

An N-terminal signal peptide occupies residues methionine 1 to alanine 33. The Laminin N-terminal domain maps to arginine 46–arginine 285. N-linked (GlcNAc...) asparagine glycans are attached at residues asparagine 60 and asparagine 134. Intrachain disulfides connect cysteine 286/cysteine 295, cysteine 288/cysteine 305, cysteine 307/cysteine 316, cysteine 319/cysteine 339, cysteine 342/cysteine 351, cysteine 344/cysteine 367, cysteine 370/cysteine 379, cysteine 382/cysteine 395, cysteine 398/cysteine 410, cysteine 400/cysteine 416, cysteine 418/cysteine 427, cysteine 430/cysteine 442, cysteine 445/cysteine 456, cysteine 447/cysteine 463, cysteine 465/cysteine 474, and cysteine 477/cysteine 492. Laminin EGF-like domains are found at residues cysteine 286 to proline 341, cysteine 342 to serine 397, cysteine 398 to proline 444, and cysteine 445 to proline 494. Residues cysteine 495–cysteine 504 enclose the Laminin EGF-like 5; first part domain. Positions serine 514–serine 689 constitute a Laminin IV type A domain. N-linked (GlcNAc...) asparagine glycosylation is found at asparagine 576 and asparagine 650. The region spanning cysteine 690–leucine 723 is the Laminin EGF-like 5; second part domain. 24 disulfides stabilise this stretch: cysteine 724–cysteine 733, cysteine 726–cysteine 740, cysteine 742–cysteine 751, cysteine 754–cysteine 770, cysteine 773–cysteine 781, cysteine 775–cysteine 792, cysteine 795–cysteine 804, cysteine 807–cysteine 825, cysteine 828–cysteine 842, cysteine 830–cysteine 849, cysteine 852–cysteine 861, cysteine 864–cysteine 881, cysteine 884–cysteine 898, cysteine 886–cysteine 905, cysteine 907–cysteine 916, cysteine 919–cysteine 932, cysteine 935–cysteine 947, cysteine 937–cysteine 954, cysteine 956–cysteine 965, cysteine 968–cysteine 980, cysteine 983–cysteine 995, cysteine 985–cysteine 1001, cysteine 1003–cysteine 1012, and cysteine 1015–cysteine 1028. 6 Laminin EGF-like domains span residues cysteine 724–proline 772, cysteine 773–leucine 827, cysteine 828–alanine 883, cysteine 884–arginine 934, cysteine 935–proline 982, and cysteine 983–glutamate 1030. 2 N-linked (GlcNAc...) asparagine glycosylation sites follow: asparagine 1022 and asparagine 1107. The segment at glutamate 1030–proline 1609 is domain II and I. The stretch at valine 1038–proline 1609 forms a coiled coil. At serine 1149 the chain carries Phosphoserine; by FAM20C. N-linked (GlcNAc...) asparagine glycosylation is found at asparagine 1161, asparagine 1175, asparagine 1205, asparagine 1223, asparagine 1241, asparagine 1380, asparagine 1395, and asparagine 1439. Serine 1493 carries the post-translational modification Phosphoserine.

Laminin is a complex glycoprotein, consisting of three different polypeptide chains (alpha, beta, gamma), which are bound to each other by disulfide bonds into a cross-shaped molecule comprising one long and three short arms with globules at each end. Gamma-1 is a subunit of laminin-1 (laminin-111 or EHS laminin), laminin-2 (laminin-211 or merosin), laminin-3 (laminin-121 or S-laminin), laminin-4 (laminin-221 or S-merosin), laminin-6 (laminin-311 or K-laminin), laminin-7 (laminin-321 or KS-laminin), laminin-8 (laminin-411), laminin-9 (laminin-421), laminin-10 (laminin-511) and laminin-11 (laminin-521). Interacts with SVEP1. Found in the basement membranes (major component).

It is found in the secreted. It localises to the extracellular space. The protein resides in the extracellular matrix. Its subcellular location is the basement membrane. Functionally, binding to cells via a high affinity receptor, laminin is thought to mediate the attachment, migration and organization of cells into tissues during embryonic development by interacting with other extracellular matrix components. The chain is Laminin subunit gamma-1 from Homo sapiens (Human).